The following is a 228-amino-acid chain: Prolactin (228 aa).

The N-terminal stretch at 1 to 29 (MCTKRSSLKGSLLLLLLISSLLLSRSVDS) is a signal peptide. A disulfide bridge connects residues cysteine 33 and cysteine 40. 3 positions are modified to phosphoserine: serine 55, serine 63, and serine 119. Intrachain disulfides connect cysteine 87–cysteine 203 and cysteine 220–cysteine 228.

This sequence belongs to the somatotropin/prolactin family. In terms of assembly, interacts with PRLR.

It is found in the secreted. In terms of biological role, prolactin acts primarily on the mammary gland by promoting lactation. The polypeptide is Prolactin (PRL) (Isoodon macrourus (Short-nosed bandicoot)).